The primary structure comprises 312 residues: Olfactory receptor 14C36 (312 aa).

Over 1–23 (MPNSTTVMEFLLMRFSDVWTLQI) the chain is Extracellular. N3 carries N-linked (GlcNAc...) asparagine glycosylation. A helical membrane pass occupies residues 24-44 (LHSASFFMLYLVTLMGNILIV). At 45 to 52 (TVTTCDSS) the chain is on the cytoplasmic side. A helical membrane pass occupies residues 53-73 (LHMPMYFFLRNLSILDACYIS). Over 74-97 (VTVPTSCVNSLLDSTTISKAGCVA) the chain is Extracellular. Residues C95 and C187 are joined by a disulfide bond. A helical membrane pass occupies residues 98–118 (QVFLVVFFVYVELLFLTIMAH). Residues 119–137 (DRYVAVCQPLHYPVIVNSR) lie on the Cytoplasmic side of the membrane. Residues 138–158 (ICIQMTLASLLSGLVYAGMHT) form a helical membrane-spanning segment. At 159 to 194 (GSTFQLPFCRSNVIHQFFCDIPSLLKLSCSDTFSNE) the chain is on the extracellular side. A helical transmembrane segment spans residues 195 to 215 (VMIVVSALGVGGGCFIFIIRS). The Cytoplasmic segment spans residues 216–235 (YIHIFSTVLGFPRGADRTKA). Residues 236–256 (FSTCIPHILVVSVFLSSCSSV) traverse the membrane as a helical segment. Residues 257-269 (YLRPPAIPAATQD) are Extracellular-facing. A helical membrane pass occupies residues 270-290 (LILSGFYSIMPPLFNPIIYSL). The Cytoplasmic segment spans residues 291–312 (RNKQIKVAIKKIMKRIFYSENV).

It belongs to the G-protein coupled receptor 1 family.

The protein localises to the cell membrane. In terms of biological role, odorant receptor. The sequence is that of Olfactory receptor 14C36 (OR14C36) from Homo sapiens (Human).